The chain runs to 235 residues: Large ribosomal subunit protein uL1 (235 aa).

It belongs to the universal ribosomal protein uL1 family. As to quaternary structure, part of the 50S ribosomal subunit.

Binds directly to 23S rRNA. The L1 stalk is quite mobile in the ribosome, and is involved in E site tRNA release. In terms of biological role, protein L1 is also a translational repressor protein, it controls the translation of the L11 operon by binding to its mRNA. The protein is Large ribosomal subunit protein uL1 of Nitratidesulfovibrio vulgaris (strain ATCC 29579 / DSM 644 / CCUG 34227 / NCIMB 8303 / VKM B-1760 / Hildenborough) (Desulfovibrio vulgaris).